Here is a 629-residue protein sequence, read N- to C-terminus: Forkhead box protein O1-B (629 aa).

Disordered stretches follow at residues 1–54, 88–134, 211–308, and 359–397; these read MAEP…PEQG, CAHP…SRRN, SWWM…SPFL, and KNNT…QPQV. A compositionally biased stretch (polar residues) spans 36–46; it reads QPGNSNTSSPA. Low complexity-rich tracts occupy residues 90-107 and 115-133; these read HPQQ…THPQ and PASG…SSRR. Positions 136–230 form a DNA-binding region, fork-head; it reads WGNMSYADLI…KSGKSPRRRA (95 aa). Residues 240–251 are compositionally biased toward basic residues; the sequence is TKSRGRAAKKKM. 3 stretches are compositionally biased toward polar residues: residues 291-302, 359-377, and 385-397; these read TRASSDASTLSG, KNNT…SPLM, and SYTS…QPQV.

Its subcellular location is the cytoplasm. It is found in the nucleus. Transcription factor that regulates metabolic homeostasis in response to oxidative stress. Binds to the consensus sequence 5'-TT[G/A]TTTTG-3' and the related Daf-16 family binding element (DBE) with consensus sequence 5'-TT[G/A]TTTAC-3'. Main regulator of redox balance and osteoblast numbers and controls bone mass. Orchestrates the endocrine function of the skeleton in regulating glucose metabolism. May act as a positive regulator of apoptosis in cardiac smooth muscle cells as a result of its transcriptional activation of pro-apoptotic genes. The polypeptide is Forkhead box protein O1-B (foxo1b) (Danio rerio (Zebrafish)).